Here is a 311-residue protein sequence, read N- to C-terminus: MSNQLLDRVVAEIADEMAQRADRGEVASYIPELARVDPKAFGLAVIGADGHIAAAGDADVPFSIQSISKVFTLTLALGKAGDRLWRRVGREPSGSAFNSIVQLEHERGIPRNPFINAGAIAVTDLILSGHQPREALGEILRFMQFLAGDSSIAIDEAVAKSEQRTGFRNAALANYMKSFGVLDNPVEYTLGVYFHHCAIAMSCRQLAMAGRFLAHNGQNPSTGLNVVSSERARRINALMLTCGHYDGSGEFAYRVGLPGKSGVGGGILAVAPGRASIAVWAPGLDAAGNSHLGRVALEGLTKRMGWSIFGV.

The substrate site is built by S66, N116, E162, N169, Y193, Y245, and V263.

This sequence belongs to the glutaminase family. Homotetramer.

It carries out the reaction L-glutamine + H2O = L-glutamate + NH4(+). This Rhodopseudomonas palustris (strain ATCC BAA-98 / CGA009) protein is Glutaminase.